A 100-amino-acid chain; its full sequence is Mitochondrial import inner membrane translocase subunit Tim10 B (100 aa).

The Twin CX3C motif motif lies at 25 to 49; that stretch reads CFQRCVPSLHHRALDAEEEACLHSC. 2 disulfides stabilise this stretch: Cys25-Cys49 and Cys29-Cys45.

It belongs to the small Tim family. In terms of assembly, component of the TIM22 complex, which core is composed of TIMM22, associated with TIMM10 (TIMM10A and/or TIMM10B), TIMM9, AGK and TIMM29.

It localises to the mitochondrion inner membrane. In terms of biological role, component of the TIM22 complex, a complex that mediates the import and insertion of multi-pass transmembrane proteins into the mitochondrial inner membrane. The TIM22 complex forms a twin-pore translocase that uses the membrane potential as the external driving force. In the TIM22 complex, it may act as a docking point for the soluble 70 kDa complex that guides the target proteins in transit through the aqueous mitochondrial intermembrane space. This Mus musculus (Mouse) protein is Mitochondrial import inner membrane translocase subunit Tim10 B (Timm10b).